We begin with the raw amino-acid sequence, 643 residues long: Probable potassium transport system protein Kup 2 (643 aa).

The tract at residues 1 to 20 (MSSHVPSFLRGTPDMTAHGG) is disordered. 12 consecutive transmembrane segments (helical) span residues 27–47 (VAGLMLAAIGVVFGDIGTSPL), 70–90 (VLSLVFWAITIIVSFKYVIII), 120–140 (LMVSALGIFAAALFYGDSIIT), 157–177 (PHLEQWVVPLTIVILFVLFAI), 185–205 (VGKMFGPVMLVWFLTLAILGI), 231–251 (GWHAFLALGSVVLAVTGAEAL), 267–287 (WYLLVLPALILNYFGQGALLI), 300–320 (LAPASLALPLVILATLATVIA), 357–377 (IYLPFVNWLLMCMVMVLVVGF), 389–409 (VAVTGTMVIDALLVGTVMLLI), 419–439 (WLIGGFLVVDLAFFLANSIKI), and 440–460 (PDGGWFPLVVGGLLFTILTTW).

The protein belongs to the HAK/KUP transporter (TC 2.A.72) family.

The protein resides in the cell inner membrane. It catalyses the reaction K(+)(in) + H(+)(in) = K(+)(out) + H(+)(out). Its function is as follows. Transport of potassium into the cell. Likely operates as a K(+):H(+) symporter. This Paramagnetospirillum magneticum (strain ATCC 700264 / AMB-1) (Magnetospirillum magneticum) protein is Probable potassium transport system protein Kup 2.